The sequence spans 277 residues: MAVVTMRELLDAGVHFGHQTRRWNPKMKRFIFTDRNGIYIIDLQQTLTYIDEAYEFVKETVAHGGNILYVGTKKQAQEAVANEAERVGMPYVNHRWLGGMLTNFQTVAKRLHRLKELQAMDAAEDGYKGRTKKEVLMLTRERNKLERVLGGIADMTKTPSALWIVDTNKEHIAVSEAQKLNIPVVAILDTNCDPDVVDYPIPGNDDAIRSANLLTSIISSAVEAGRQARAERQEAAAKEAAGDADKAPAEAERTEAPAEEAPAEAQSEAKAEGNTEA.

Basic and acidic residues-rich tracts occupy residues 227 to 256 (QARA…RTEA) and 267 to 277 (SEAKAEGNTEA). The disordered stretch occupies residues 227-277 (QARAERQEAAAKEAAGDADKAPAEAERTEAPAEEAPAEAQSEAKAEGNTEA).

Belongs to the universal ribosomal protein uS2 family.

This Corynebacterium jeikeium (strain K411) protein is Small ribosomal subunit protein uS2.